The following is a 297-amino-acid chain: Adrenocorticotropic hormone receptor (297 aa).

Residues 1–23 (MKHITDLYESVNSTMSNKSDCPP) are Extracellular-facing. Residues N12 and N17 are each glycosylated (N-linked (GlcNAc...) asparagine). Disulfide bonds link C21–C253 and C245–C251. The helical transmembrane segment at 24-49 (VVLPEEVFFTISVIGVLENLIVLLAV) threads the bilayer. Over 50-58 (IKNKNLQSP) the chain is Cytoplasmic. Residues 59–79 (MYFFICSLAISDMLGSLYKIL) form a helical membrane-spanning segment. Topologically, residues 80 to 104 (ENILIIFRNMGYLEPRGGFESTADD) are extracellular. A helical membrane pass occupies residues 105–126 (VVDSLFILSLLGSICSLSAIAA). Topologically, residues 127-147 (DRYITIFHALQYQRLVTPRRA) are cytoplasmic. Residues 148–168 (AVVLLIIWACCIGSGITIVTF) form a helical membrane-spanning segment. Residues 169 to 180 (SHHVPAVIAFTA) lie on the Extracellular side of the membrane. A helical membrane pass occupies residues 181–199 (LFPLMLVFILCLYGHMFLL). Over 200–217 (ARSHARRVSTLPRANMKG) the chain is Cytoplasmic. Residues 218-244 (AITLTVLLGVFIFCWAPFVLHILLMTF) form a helical membrane-spanning segment. Over 245 to 256 (CPADPYCACYLA) the chain is Extracellular. Residues 257–278 (LFQVNAVLIMCNAIIDPFIYAF) traverse the membrane as a helical segment. At 279-297 (RSPELRDAFKKMIICKRYP) the chain is on the cytoplasmic side. The S-palmitoyl cysteine moiety is linked to residue C293.

It belongs to the G-protein coupled receptor 1 family. Homodimer. Interacts with corticotropin (ACTH). Interacts with MRAP; this interaction targets MC2R to the plasma membrane. Interacts with MRAP2; competing with MRAP for binding to MC2R and impairing the binding of corticotropin (ACTH). Ubiquitinated by MGRN1 that may be involved in post-endocytic trafficking and/or degradation of internalized receptor. In terms of tissue distribution, expressed in skin and adrenal gland tissues.

Its subcellular location is the cell membrane. Its function is as follows. Hormone receptor primarily expressed in adrenal cortex that plays a key role in regulating adrenocortical function. Upon corticotropin (ACTH) binding, facilitates the release of adrenal glucocorticoids, including cortisol and corticosterone. In addition, MC2R is required for fetal and neonatal adrenal gland development. Mechanistically, activates adenylate cyclase (cAMP), the MAPK cascade as well as the cAMP-dependent protein kinase A pathway leading to steroidogenic factor 1/NR5A1-mediated transcriptional activation. This is Adrenocorticotropic hormone receptor (MC2R) from Sus scrofa (Pig).